The following is a 245-amino-acid chain: tRNA pseudouridine synthase A (245 aa).

Asp-52 acts as the Nucleophile in catalysis. Tyr-111 serves as a coordination point for substrate.

The protein belongs to the tRNA pseudouridine synthase TruA family. Homodimer.

It carries out the reaction uridine(38/39/40) in tRNA = pseudouridine(38/39/40) in tRNA. Formation of pseudouridine at positions 38, 39 and 40 in the anticodon stem and loop of transfer RNAs. The polypeptide is tRNA pseudouridine synthase A (Rhodopseudomonas palustris (strain BisB18)).